The primary structure comprises 251 residues: 3-deoxy-manno-octulosonate cytidylyltransferase (251 aa).

The protein belongs to the KdsB family.

It localises to the cytoplasm. It catalyses the reaction 3-deoxy-alpha-D-manno-oct-2-ulosonate + CTP = CMP-3-deoxy-beta-D-manno-octulosonate + diphosphate. Its pathway is nucleotide-sugar biosynthesis; CMP-3-deoxy-D-manno-octulosonate biosynthesis; CMP-3-deoxy-D-manno-octulosonate from 3-deoxy-D-manno-octulosonate and CTP: step 1/1. It participates in bacterial outer membrane biogenesis; lipopolysaccharide biosynthesis. Functionally, activates KDO (a required 8-carbon sugar) for incorporation into bacterial lipopolysaccharide in Gram-negative bacteria. In Rhizobium etli (strain CIAT 652), this protein is 3-deoxy-manno-octulosonate cytidylyltransferase.